A 266-amino-acid chain; its full sequence is Phosphate import ATP-binding protein PstB 1 (266 aa).

In terms of domain architecture, ABC transporter spans 18–261 (AQTSNLSFYY…PTNQLTEQYV (244 aa)). 50–57 (GPSGCGKT) contacts ATP.

This sequence belongs to the ABC transporter superfamily. Phosphate importer (TC 3.A.1.7) family. As to quaternary structure, the complex is composed of two ATP-binding proteins (PstB), two transmembrane proteins (PstC and PstA) and a solute-binding protein (PstS).

The protein resides in the cell inner membrane. It carries out the reaction phosphate(out) + ATP + H2O = ADP + 2 phosphate(in) + H(+). Functionally, part of the ABC transporter complex PstSACB involved in phosphate import. Responsible for energy coupling to the transport system. The sequence is that of Phosphate import ATP-binding protein PstB 1 from Gloeobacter violaceus (strain ATCC 29082 / PCC 7421).